The following is a 279-amino-acid chain: DegV domain-containing protein lmo1863 (279 aa).

Positions I4–T278 constitute a DegV domain. S62 and S94 together coordinate hexadecanoate.

Its function is as follows. May bind long-chain fatty acids, such as palmitate, and may play a role in lipid transport or fatty acid metabolism. This is DegV domain-containing protein lmo1863 from Listeria monocytogenes serovar 1/2a (strain ATCC BAA-679 / EGD-e).